We begin with the raw amino-acid sequence, 231 residues long: MFLRNVRVISLNSRRLFRTMSTVKGKPEDAKIIEARHVKETSDCKWIGLQKIIYKDPNGKEREWDSAVRTTRSSGGVDGIGILTILKYKDGKPDEILLQKQFRPPVEGVCIEMPAGLIDAGEDIDTAALRELKEETGYSGKIISKSPTVFNDPGFTNTNLCLVTVEVDMSLPENQKPVTQLEDNEFIECFSVELHKFPDEMVKLDQQGYKLDARVQNVAQGILMAKQYHIK.

Residue Phe-2 is modified to N-acetylserine. Residues Trp-46, 64–65, Arg-69, and Arg-103 contribute to the substrate site; that span reads WD. The Nudix hydrolase domain maps to 75-214; sequence GGVDGIGILT…DQQGYKLDAR (140 aa). Ala-115 serves as a coordination point for Mg(2+). The short motif at 116–137 is the Nudix box element; it reads GLIDAGEDIDTAALRELKEETG. Substrate is bound at residue Leu-117. Residues Glu-131 and Glu-135 each contribute to the Mg(2+) site. Asp-152 lines the substrate pocket. Glu-185 contributes to the Mg(2+) binding site.

It belongs to the Nudix hydrolase family. NudF subfamily. Mg(2+) serves as cofactor. Requires Mn(2+) as cofactor.

The catalysed reaction is ADP-D-ribose + H2O = D-ribose 5-phosphate + AMP + 2 H(+). This chain is ADP-ribose pyrophosphatase (YSA1), found in Saccharomyces cerevisiae (strain ATCC 204508 / S288c) (Baker's yeast).